Consider the following 102-residue polypeptide: Small ribosomal subunit protein uS10 (102 aa).

This sequence belongs to the universal ribosomal protein uS10 family. As to quaternary structure, part of the 30S ribosomal subunit.

Its function is as follows. Involved in the binding of tRNA to the ribosomes. This chain is Small ribosomal subunit protein uS10, found in Methanococcus maripaludis (strain C7 / ATCC BAA-1331).